Consider the following 292-residue polypeptide: Bifunctional protein FolD (292 aa).

Residues 166-168 (GRS), Ser-191, and Ile-232 contribute to the NADP(+) site.

It belongs to the tetrahydrofolate dehydrogenase/cyclohydrolase family. Homodimer.

The catalysed reaction is (6R)-5,10-methylene-5,6,7,8-tetrahydrofolate + NADP(+) = (6R)-5,10-methenyltetrahydrofolate + NADPH. The enzyme catalyses (6R)-5,10-methenyltetrahydrofolate + H2O = (6R)-10-formyltetrahydrofolate + H(+). The protein operates within one-carbon metabolism; tetrahydrofolate interconversion. Functionally, catalyzes the oxidation of 5,10-methylenetetrahydrofolate to 5,10-methenyltetrahydrofolate and then the hydrolysis of 5,10-methenyltetrahydrofolate to 10-formyltetrahydrofolate. The sequence is that of Bifunctional protein FolD from Wolbachia sp. subsp. Drosophila simulans (strain wRi).